A 186-amino-acid chain; its full sequence is Large ribosomal subunit protein uL10 (186 aa).

Belongs to the universal ribosomal protein uL10 family. Part of the ribosomal stalk of the 50S ribosomal subunit. The N-terminus interacts with L11 and the large rRNA to form the base of the stalk. The C-terminus forms an elongated spine to which L12 dimers bind in a sequential fashion forming a multimeric L10(L12)X complex.

Forms part of the ribosomal stalk, playing a central role in the interaction of the ribosome with GTP-bound translation factors. The protein is Large ribosomal subunit protein uL10 of Rhodococcus jostii (strain RHA1).